Reading from the N-terminus, the 73-residue chain is MDCCNEGACTKLDEDILDIPLDDPDANAAAAKIQASFRGHMTRKKIKGGEIDRKTKDAECANSTRGGDLRNGD.

Residues 26 to 55 (ANAAAAKIQASFRGHMTRKKIKGGEIDRKT) enclose the IQ domain. S36 bears the Phosphoserine; by PKC mark. The span at 47–59 (KGGEIDRKTKDAE) shows a compositional bias: basic and acidic residues. The interval 47–73 (KGGEIDRKTKDAECANSTRGGDLRNGD) is disordered.

This sequence belongs to the neurogranin family.

Functionally, acts as a 'third messenger' substrate of protein kinase C-mediated molecular cascades during synaptic development and remodeling. Binds to calmodulin in the absence of calcium. The protein is Neurogranin (NRGN) of Serinus canaria (Island canary).